The chain runs to 281 residues: 2-dehydro-3-deoxyphosphooctonate aldolase (281 aa).

The protein belongs to the KdsA family.

The protein localises to the cytoplasm. The catalysed reaction is D-arabinose 5-phosphate + phosphoenolpyruvate + H2O = 3-deoxy-alpha-D-manno-2-octulosonate-8-phosphate + phosphate. Its pathway is carbohydrate biosynthesis; 3-deoxy-D-manno-octulosonate biosynthesis; 3-deoxy-D-manno-octulosonate from D-ribulose 5-phosphate: step 2/3. The protein operates within bacterial outer membrane biogenesis; lipopolysaccharide biosynthesis. The chain is 2-dehydro-3-deoxyphosphooctonate aldolase from Pseudomonas fluorescens (strain ATCC BAA-477 / NRRL B-23932 / Pf-5).